The sequence spans 1375 residues: Ubiquitin carboxyl-terminal hydrolase 47 (1375 aa).

An N6-acetyllysine modification is found at Lys-122. Residues Val-188–Lys-564 enclose the USP domain. The active-site Nucleophile is the Cys-197. Positions Asp-425 to Asn-452 are disordered. The span at Gln-430–Asn-452 shows a compositional bias: polar residues. His-503 functions as the Proton acceptor in the catalytic mechanism. A Phosphoserine modification is found at Ser-832. 3 disordered regions span residues Thr-840–Val-859, Leu-880–Ser-968, and Asn-983–Lys-1024. Low complexity predominate over residues Ser-882–Ser-899. Ser-910 is modified (phosphoserine). Basic and acidic residues predominate over residues Leu-912–Gln-928. Residues His-929–Phe-938 are compositionally biased toward polar residues. A Phosphoserine modification is found at Ser-933. The span at Ser-940 to Asn-950 shows a compositional bias: basic and acidic residues. A compositionally biased stretch (low complexity) spans Ser-953–Ser-968. The span at Lys-997 to Trp-1006 shows a compositional bias: basic and acidic residues. Positions Asp-1007 to Asp-1020 are enriched in acidic residues. Ser-1013 is modified (phosphoserine). The residue at position 1015 (Thr-1015) is a Phosphothreonine. Ser-1017 is subject to Phosphoserine.

It belongs to the peptidase C19 family. In terms of assembly, interacts with BTRC and FBXW11. Interacts with POLB. Expressed in skeletal muscle, heart and testis.

It is found in the cytoplasm. It carries out the reaction Thiol-dependent hydrolysis of ester, thioester, amide, peptide and isopeptide bonds formed by the C-terminal Gly of ubiquitin (a 76-residue protein attached to proteins as an intracellular targeting signal).. Functionally, ubiquitin-specific protease that specifically deubiquitinates monoubiquitinated DNA polymerase beta (POLB), stabilizing POLB thereby playing a role in base-excision repair (BER). Acts as a regulator of cell growth and genome integrity. May also indirectly regulate CDC25A expression at a transcriptional level. The chain is Ubiquitin carboxyl-terminal hydrolase 47 (USP47) from Homo sapiens (Human).